A 204-amino-acid chain; its full sequence is Somatotropin (204 aa).

The N-terminal stretch at 1-17 (MDRAILLLSVVCLVVSS) is a signal peptide. Pyrrolidone carboxylic acid is present on glutamine 18. Histidine 36 serves as a coordination point for Zn(2+). The cysteines at positions 69 and 177 are disulfide-linked. Glutamate 186 serves as a coordination point for Zn(2+). The cysteines at positions 194 and 202 are disulfide-linked.

It belongs to the somatotropin/prolactin family.

The protein resides in the secreted. Its function is as follows. Growth hormone plays an important role in growth control and is involved in the regulation of several anabolic processes. Implicated as an osmoregulatory substance important for seawater adaptation. The sequence is that of Somatotropin (gh) from Odontesthes argentinensis (Marine silverside).